Consider the following 1005-residue polypeptide: Vacuolar membrane protease (1005 aa).

Topologically, residues 1–14 (MAKETTARSILGYQ) are cytoplasmic. The chain crosses the membrane as a helical span at residues 15-35 (TLPTTALIALIYVVAFFSVLV). Topologically, residues 36–353 (SDQLPSIPHP…PEDSAKQKSK (318 aa)) are vacuolar. N-linked (GlcNAc...) asparagine glycosylation occurs at Asn107. Zn(2+) contacts are provided by His152 and Asp164. Glu196 acts as the Proton acceptor in catalysis. Glu197 contributes to the Zn(2+) binding site. N-linked (GlcNAc...) asparagine glycosylation is present at Asn213. Residues Glu222 and His311 each contribute to the Zn(2+) site. Residues 354-374 (PGVYFDRPVVLALLWAIGAVL) form a helical membrane-spanning segment. At 375-448 (KHNAGSPPPP…LITVWKQASF (74 aa)) the chain is on the cytoplasmic side. The segment at 379–420 (GSPPPPPKPTVPHSANNASAGTGRPGASTRQPTRSFGSNEDA) is disordered. Positions 406–419 (STRQPTRSFGSNED) are enriched in polar residues. A helical membrane pass occupies residues 449–469 (WIALIVTVGLQALLAWGYVAI). The Vacuolar portion of the chain corresponds to 470–479 (NPFTIYSRPY). Residues 480–500 (FVLLSFFALSFFSMTLVLQAA) form a helical membrane-spanning segment. The Cytoplasmic segment spans residues 501-519 (FPSSPVKHAIEVREQEKTT). The chain crosses the membrane as a helical span at residues 520-540 (ILLHLHLLSWIALLLSTILIG). The Vacuolar segment spans residues 541 to 543 (KSQ). The chain crosses the membrane as a helical span at residues 544-564 (VGSFYVVTVWYLGIWAATVIG). The Cytoplasmic segment spans residues 565–644 (TLQPILVSKR…RKTNSKSKED (80 aa)). The disordered stretch occupies residues 577-640 (DKGKRRARRS…ASNRRKTNSK (64 aa)). Low complexity predominate over residues 588–606 (SASTSSSSSSSSSSSSGSD). The helical transmembrane segment at 645 to 665 (GAIGWWIAQVLLTVPPVVMLV) threads the bilayer. At 666–686 (GQITSIVLEAMNQTLTDGNSA) the chain is on the vacuolar side. Residue Asn677 is glycosylated (N-linked (GlcNAc...) asparagine). The helical transmembrane segment at 687 to 707 (WSIYLLTALLATMLVLPVAPF) threads the bilayer. The Cytoplasmic portion of the chain corresponds to 708-713 (SPKLHR). A helical transmembrane segment spans residues 714 to 734 (GLIFLSAAVFVGFTIYLWVVF). The Vacuolar portion of the chain corresponds to 735-1005 (PFTRQDPFKV…VEASAPFTVV (271 aa)). 2 N-linked (GlcNAc...) asparagine glycosylation sites follow: Asn761 and Asn961.

This sequence belongs to the peptidase M28 family. Zn(2+) is required as a cofactor.

The protein resides in the vacuole membrane. May be involved in vacuolar sorting and osmoregulation. This chain is Vacuolar membrane protease, found in Coprinopsis cinerea (strain Okayama-7 / 130 / ATCC MYA-4618 / FGSC 9003) (Inky cap fungus).